Consider the following 684-residue polypeptide: Cleavage and polyadenylation specificity factor subunit 3 (684 aa).

N-acetylserine is present on serine 2. Histidine 71, histidine 73, aspartate 75, histidine 76, histidine 158, and aspartate 179 together coordinate Zn(2+). The active-site Proton donor is the histidine 396. Histidine 418 provides a ligand contact to Zn(2+). Residues lysine 462, lysine 465, and lysine 545 each participate in a glycyl lysine isopeptide (Lys-Gly) (interchain with G-Cter in SUMO) cross-link. At serine 659 the chain carries Phosphoserine. Phosphothreonine is present on threonine 681.

It belongs to the metallo-beta-lactamase superfamily. RNA-metabolizing metallo-beta-lactamase-like family. CPSF3 subfamily. As to quaternary structure, component of the cleavage and polyadenylation specificity factor (CPSF) complex, composed of CPSF1, CPSF2, CPSF3, CPSF4 and FIP1L1. Interacts with CPSF2, CSTF2 and SYMPK. Interacts with TUT1; the interaction is direct and mediates the recruitment of the CPSF complex on the 3'UTR of pre-mRNAs. Interacts with WDR33. Interacts with ZC3H3. It depends on Zn(2+) as a cofactor. Post-translationally, sumoylated on Lys-462, Lys-465 and Lys-545, preferentially by SUMO3.

It localises to the nucleus. Its function is as follows. Component of the cleavage and polyadenylation specificity factor (CPSF) complex that plays a key role in pre-mRNA 3'-end formation, recognizing the AAUAAA signal sequence and interacting with poly(A) polymerase and other factors to bring about cleavage and poly(A) addition. Has endonuclease activity, and functions as an mRNA 3'-end-processing endonuclease. Also involved in the histone 3'-end pre-mRNA processing. U7 snRNP-dependent protein that induces both the 3'-endoribonucleolytic cleavage of histone pre-mRNAs and acts as a 5' to 3' exonuclease for degrading the subsequent downstream cleavage product (DCP) of mature histone mRNAs. Cleavage occurs after the 5'-ACCCA-3' sequence in the histone pre-mRNA leaving a 3'hydroxyl group on the upstream fragment containing the stem loop (SL) and 5' phosphate on the downstream cleavage product (DCP) starting with CU nucleotides. The U7-dependent 5' to 3' exonuclease activity is processive and degrades the DCP RNA substrate even after complete removal of the U7-binding site. Binds to the downstream cleavage product (DCP) of histone pre-mRNAs and the cleaved DCP RNA substrate in a U7 snRNP dependent manner. Required for entering/progressing through S-phase of the cell cycle. Required for the selective processing of microRNAs (miRNAs) during embryonic stem cell differentiation via its interaction with ISY1. Required for the biogenesis of all miRNAs from the pri-miR-17-92 primary transcript except miR-92a. Only required for the biogenesis of miR-290 and miR-96 from the pri-miR-290-295 and pri-miR-96-183 primary transcripts, respectively. This is Cleavage and polyadenylation specificity factor subunit 3 (CPSF3) from Homo sapiens (Human).